Consider the following 191-residue polypeptide: MLSFLSSNLSNVRQSLAQVLNFALVLSTAFMMWKGLSVFTASSSPVVVVLSGSMEPAFQRGDLLFLWNRSPRAEVGEIVVYNVRGKDIPIVHRVVRTFPEIEGKTKKVKEISESSPIPNNMLLTKGDNNVADDVELYARGQDYLNREEDIVGSVRGYIPMVGYVTILLSEYPWLKTALLGIMGLMVMLQRE.

Residues 1–18 (MLSFLSSNLSNVRQSLAQ) lie on the Cytoplasmic side of the membrane. A helical; Signal-anchor for type II membrane protein membrane pass occupies residues 19–39 (VLNFALVLSTAFMMWKGLSVF). Topologically, residues 40–191 (TASSSPVVVV…MGLMVMLQRE (152 aa)) are lumenal. Active-site charge relay system residues include S53, H92, and D133. A C-terminal short (CTS) helix region spans residues 177–188 (ALLGIMGLMVML).

It belongs to the peptidase S26B family. As to quaternary structure, component of the signal peptidase complex (SPC) composed of a catalytic subunit SEC11 and three accessory subunits SPC1, SPC2 and SPC3. The complex induces a local thinning of the ER membrane which is used to measure the length of the signal peptide (SP) h-region of protein substrates. This ensures the selectivity of the complex towards h-regions shorter than 18-20 amino acids. SPC associates with the translocon complex.

Its subcellular location is the endoplasmic reticulum membrane. The catalysed reaction is Cleavage of hydrophobic, N-terminal signal or leader sequences from secreted and periplasmic proteins.. In terms of biological role, catalytic component of the signal peptidase complex (SPC) which catalyzes the cleavage of N-terminal signal sequences from nascent proteins as they are translocated into the lumen of the endoplasmic reticulum. Specifically cleaves N-terminal signal peptides that contain a hydrophobic alpha-helix (h-region) shorter than 18-20 amino acids. In Aspergillus oryzae (strain ATCC 42149 / RIB 40) (Yellow koji mold), this protein is Signal peptidase complex catalytic subunit sec11 (sec11).